The sequence spans 200 residues: Sec-independent protein translocase protein TatB (200 aa).

The chain crosses the membrane as a helical span at residues 2–22; sequence LPDIGGTELLIIAAVALIVVG. The segment at 160-200 is disordered; the sequence is KAPRKRASQKQEITVEAPKAVRAPRKRASKAGDSTASDIVS. A compositionally biased stretch (polar residues) spans 191–200; the sequence is GDSTASDIVS.

This sequence belongs to the TatB family. As to quaternary structure, the Tat system comprises two distinct complexes: a TatABC complex, containing multiple copies of TatA, TatB and TatC subunits, and a separate TatA complex, containing only TatA subunits. Substrates initially bind to the TatABC complex, which probably triggers association of the separate TatA complex to form the active translocon.

The protein resides in the cell inner membrane. In terms of biological role, part of the twin-arginine translocation (Tat) system that transports large folded proteins containing a characteristic twin-arginine motif in their signal peptide across membranes. Together with TatC, TatB is part of a receptor directly interacting with Tat signal peptides. TatB may form an oligomeric binding site that transiently accommodates folded Tat precursor proteins before their translocation. The polypeptide is Sec-independent protein translocase protein TatB (Caulobacter vibrioides (strain ATCC 19089 / CIP 103742 / CB 15) (Caulobacter crescentus)).